A 196-amino-acid polypeptide reads, in one-letter code: T-cell surface glycoprotein CD3 epsilon chain (196 aa).

Positions 1–21 are cleaved as a signal peptide; that stretch reads MPSGNLWKVLGLCLLSVGAWG. Residues 22-116 lie on the Extracellular side of the membrane; sequence QEDIERPDED…VCENCVEVDL (95 aa). Residues 28–102 form the Ig-like domain; the sequence is PDEDTQKTFK…VGEKTSHRLY (75 aa). A disulfide bridge connects residues cysteine 49 and cysteine 91. Residues 117–137 traverse the membrane as a helical segment; it reads MAVVTIIVVDICITLGLLMVV. At 138–196 the chain is on the cytoplasmic side; the sequence is YYYSKSRKAKAMPVTRGAGAGGRPRGQNRERPPPVPNPDYEPIRKGQRDLYSGLNQRGR. Residues 150–196 form a disordered region; that stretch reads PVTRGAGAGGRPRGQNRERPPPVPNPDYEPIRKGQRDLYSGLNQRGR. Residues 164-181 are NUMB-binding region; it reads QNRERPPPVPNPDYEPIR. The 28-residue stretch at 167 to 194 folds into the ITAM domain; that stretch reads ERPPPVPNPDYEPIRKGQRDLYSGLNQR. Positions 168–175 are proline-rich sequence; the sequence is RPPPVPNP. A phosphotyrosine mark is found at tyrosine 177 and tyrosine 188.

As to quaternary structure, the TCR-CD3 complex is composed of a CD3D/CD3E and a CD3G/CD3E heterodimers that preferentially associate with TCRalpha and TCRbeta, respectively, to form TCRalpha/CD3E/CD3G and TCRbeta/CD3G/CD3E trimers. In turn, the hexamer interacts with CD3Z homodimer to form the TCR-CD3 complex. Alternatively, TCRalpha and TCRbeta can be replaced by TCRgamma and TCRdelta. Interacts with CD6. Interacts (via Proline-rich sequence) with NCK1; the interaction is ligand dependent but independent of tyrosine kinase activation. Post-translationally, phosphorylated on Tyr residues after T-cell receptor triggering by LCK in association with CD4/CD8.

It is found in the cell membrane. In terms of biological role, part of the TCR-CD3 complex present on T-lymphocyte cell surface that plays an essential role in adaptive immune response. When antigen presenting cells (APCs) activate T-cell receptor (TCR), TCR-mediated signals are transmitted across the cell membrane by the CD3 chains CD3D, CD3E, CD3G and CD3Z. All CD3 chains contain immunoreceptor tyrosine-based activation motifs (ITAMs) in their cytoplasmic domain. Upon TCR engagement, these motifs become phosphorylated by Src family protein tyrosine kinases LCK and FYN, resulting in the activation of downstream signaling pathways. In addition of this role of signal transduction in T-cell activation, CD3E plays an essential role in correct T-cell development. Also participates in internalization and cell surface down-regulation of TCR-CD3 complexes via endocytosis sequences present in CD3E cytosolic region. In addition to its role as a TCR coreceptor, it serves as a receptor for ITPRIPL1. Ligand recognition inhibits T-cell activation by promoting interaction with NCK1, which prevents CD3E-ZAP70 interaction and blocks the ERK-NFkB signaling cascade and calcium influx. The chain is T-cell surface glycoprotein CD3 epsilon chain (CD3E) from Sus scrofa (Pig).